The following is a 455-amino-acid chain: Protein king tubby (455 aa).

Positions 35 to 92 (RPMSGMRGNSRELHAYDGPMQFIGSPHNPDQILSNNSSSVHLSSSMNSSRNNSNNLRS) are disordered. The span at 67 to 92 (LSNNSSSVHLSSSMNSSRNNSNNLRS) shows a compositional bias: low complexity. Residue Ser-144 is modified to Phosphoserine.

The protein belongs to the TUB family.

It is found in the cytoplasm. Its subcellular location is the nucleus. The protein localises to the cell projection. The protein resides in the cilium membrane. It localises to the rhabdomere. In Drosophila virilis (Fruit fly), this protein is Protein king tubby.